We begin with the raw amino-acid sequence, 264 residues long: NADH-quinone oxidoreductase subunit I 2 (264 aa).

2 consecutive 4Fe-4S ferredoxin-type domains span residues 57–86 (GFLE…ISLE) and 98–127 (TQFD…HTRE). Residues cysteine 66, cysteine 69, cysteine 72, cysteine 76, cysteine 107, cysteine 110, cysteine 113, and cysteine 117 each contribute to the [4Fe-4S] cluster site. Positions 183 to 264 (APQFLPPEPP…AAPAANPESK (82 aa)) are disordered. The segment covering 197 to 264 (AKPAAKAAPA…AAPAANPESK (68 aa)) has biased composition (low complexity).

It belongs to the complex I 23 kDa subunit family. In terms of assembly, NDH-1 is composed of 14 different subunits. Subunits NuoA, H, J, K, L, M, N constitute the membrane sector of the complex. [4Fe-4S] cluster serves as cofactor.

The protein localises to the cell inner membrane. The catalysed reaction is a quinone + NADH + 5 H(+)(in) = a quinol + NAD(+) + 4 H(+)(out). NDH-1 shuttles electrons from NADH, via FMN and iron-sulfur (Fe-S) centers, to quinones in the respiratory chain. The immediate electron acceptor for the enzyme in this species is believed to be ubiquinone. Couples the redox reaction to proton translocation (for every two electrons transferred, four hydrogen ions are translocated across the cytoplasmic membrane), and thus conserves the redox energy in a proton gradient. This Anaeromyxobacter dehalogenans (strain 2CP-C) protein is NADH-quinone oxidoreductase subunit I 2.